The sequence spans 390 residues: tRNA-specific 2-thiouridylase MnmA (390 aa).

Residues 33–40 (AMSGGVDS) and Met-59 each bind ATP. Cys-131 functions as the Nucleophile in the catalytic mechanism. A disulfide bridge links Cys-131 with Cys-230. Gly-155 is a binding site for ATP. The segment at 180 to 182 (KDQ) is interaction with tRNA. Cys-230 acts as the Cysteine persulfide intermediate in catalysis.

The protein belongs to the MnmA/TRMU family.

It localises to the cytoplasm. It catalyses the reaction S-sulfanyl-L-cysteinyl-[protein] + uridine(34) in tRNA + AH2 + ATP = 2-thiouridine(34) in tRNA + L-cysteinyl-[protein] + A + AMP + diphosphate + H(+). In terms of biological role, catalyzes the 2-thiolation of uridine at the wobble position (U34) of tRNA, leading to the formation of s(2)U34. The sequence is that of tRNA-specific 2-thiouridylase MnmA from Symbiobacterium thermophilum (strain DSM 24528 / JCM 14929 / IAM 14863 / T).